The sequence spans 207 residues: Urease accessory protein UreG (207 aa).

14-21 contacts GTP; it reads GPVGSGKT.

The protein belongs to the SIMIBI class G3E GTPase family. UreG subfamily. In terms of assembly, homodimer. UreD, UreF and UreG form a complex that acts as a GTP-hydrolysis-dependent molecular chaperone, activating the urease apoprotein by helping to assemble the nickel containing metallocenter of UreC. The UreE protein probably delivers the nickel.

The protein localises to the cytoplasm. Its function is as follows. Facilitates the functional incorporation of the urease nickel metallocenter. This process requires GTP hydrolysis, probably effectuated by UreG. This chain is Urease accessory protein UreG, found in Pseudomonas putida (strain GB-1).